Here is a 334-residue protein sequence, read N- to C-terminus: MSIEQLAETAQAMVASGKGIIAIDESAGTIAKRFSSVGIENIEENRRAYRELLLTTPKLSDYISGAILFDETIRQSTKAGVPFPKYMADHGIIPGIKVDKGAYPLAGCPGELVTEGLDGLRARLEEYYKLGARFAKWRAVINIGDDIPSGMCIDANVHALARYAALCQEQGLVPMVEPEVIMDGNHDISAAYEVTEATLRSLFNALYEQNVVLEGTILKASMVIPGTDCEEQASIDEVAESTVMCLKSTVPAILPGIVFLSGGQTDAQSTAHLNAMNQLDPLPWPLSFSYGRAMQQAALKLWSQDMKGNFAKAQQVVYERAKENGLAALGKWKG.

Belongs to the class I fructose-bisphosphate aldolase family.

It catalyses the reaction beta-D-fructose 1,6-bisphosphate = D-glyceraldehyde 3-phosphate + dihydroxyacetone phosphate. The protein operates within carbohydrate degradation; glycolysis; D-glyceraldehyde 3-phosphate and glycerone phosphate from D-glucose: step 4/4. The sequence is that of Probable fructose-bisphosphate aldolase class 1 from Xylella fastidiosa (strain 9a5c).